Here is a 153-residue protein sequence, read N- to C-terminus: Regulatory protein RecX (153 aa).

This sequence belongs to the RecX family.

It localises to the cytoplasm. Modulates RecA activity. The protein is Regulatory protein RecX of Syntrophotalea carbinolica (strain DSM 2380 / NBRC 103641 / GraBd1) (Pelobacter carbinolicus).